A 777-amino-acid polypeptide reads, in one-letter code: Zygote defective protein 12 (777 aa).

Composition is skewed to basic and acidic residues over residues 1 to 10 and 18 to 36; these read MLDLTNKESE and KYED…PFKE. Residues 1-36 form a disordered region; it reads MLDLTNKESESSDNGNSKYEDSIDGREVGTSKPFKE. The interval 1-234 is interaction with dli-1; the sequence is MLDLTNKESE…ESSGKLNGNG (234 aa). One can recognise a Calponin-homology (CH) domain in the interval 44 to 169; it reads QADLADMAVW…VTLAHIGKNA (126 aa). Disordered stretches follow at residues 217–242 and 273–292; these read QSEL…RSNA and SFET…DISI. A compositionally biased stretch (low complexity) spans 218–235; it reads SELNSLSESSGKLNGNGS. Coiled-coil stretches lie at residues 236 to 399 and 425 to 688; these read SERR…HHVK and NTEL…QENR. Polar residues predominate over residues 273–288; it reads SFETAQHDMSSNSESG. A helical membrane pass occupies residues 747 to 767; it reads AMASILVLGFLVFIAWMFINI. The interaction with unc-84 stretch occupies residues 749–777; that stretch reads ASILVLGFLVFIAWMFININSALNAPPNA.

Belongs to the hook family. As to quaternary structure, homodimer. Interacts with the dynein subunit dli-1 via its N-terminus. May interact with microtubules. Interacts with sut-2. Interacts (via C-terminus) with unc-84 (via C-terminus); the interaction is direct. As to expression, expressed in the syncytial gonad, oocytes, and in all cells during the development of the early embryo.

It localises to the nucleus membrane. The protein resides in the cytoplasm. The protein localises to the cytoskeleton. It is found in the microtubule organizing center. Its subcellular location is the centrosome. Its function is as follows. Cytoskeletal linker protein, which is essential for attachment of the centrosome to the nucleus. Required for dynein localization to the nuclear envelope. Forms a LINC (LInker of Nucleoskeleton and Cytoskeleton) complex together with unc-84, that may be involved in DNA damage repair. The protein is Zygote defective protein 12 of Caenorhabditis elegans.